Consider the following 480-residue polypeptide: MARSSLFTFLCLAVFINGCLSQIEQQSPWEFQGSEVWQQHRYQSPRACRLENLRAQDPVRRAEAEAIFTEVWDQDNDEFQCAGVNMIRHTIRPKGLLLPGFSNAPKLIFVAQGFGIRGIAIPGCAETYQTDLRRSQSAGSAFKDQHQKIRPFREGDLLVVPAGVSHWMYNRGQSDLVLIVFADTRNVANQIDPYLRKFYLAGRPEQVERGVEEWERSSRKGSSGEKSGNIFSGFADEFLEEAFQIDGGLVRKLKGEDDERDRIVQVDEDFEVLLPEKDEEERSRGRYIESESESENGLEETICTLRLKQNIGRSVRADVFNPRGGRISTANYHTLPILRQVRLSAERGVLYSNAMVAPHYTVNSHSVMYATRGNARVQVVDNFGQSVFDGEVREGQVLMIPQNFVVIKRASDRGFEWIAFKTNDNAITNLLAGRVSQMRMLPLGVLSNMYRISREEAQRLKYGQQEMRVLSPGRSQGRRE.

The first 21 residues, 1 to 21 (MARSSLFTFLCLAVFINGCLS), serve as a signal peptide directing secretion. Q22 is subject to Pyrrolidone carboxylic acid. 2 cysteine pairs are disulfide-bonded: C48-C81 and C124-C303. Cupin type-1 domains are found at residues 51–251 (ENLR…GLVR) and 309–458 (QNIG…EEAQ). Positions 408 and 468 each coordinate Mg(2+).

Belongs to the 11S seed storage protein (globulins) family. Hexamer; each subunit is composed of an acidic and a basic chain derived from a single precursor and linked by a disulfide bond.

Its function is as follows. This is a seed storage protein. The chain is 11S globulin subunit beta from Cucurbita maxima (Pumpkin).